Consider the following 676-residue polypeptide: MSKLFISCALPYANGPCHLGHLRSTYIPADIYARYNRMTGVDTLMVCSTDEHGTPIAVRAEQEKKNPKDITDIYHEIIGNDLKSCNISLDSFRRTTDEIHYKMAQDFFLDLYNKGYIYEKVIDQLYCDECKRSLPDRYVEGTCPYCESEGARGDQCEVCGRHLNPTDLVEPHCLICDSTPHIEQSKQYYFKLHEFEQPLKEWINSNEHLPKNVKNFAKEWLNDGLKDWIMTRDMNWGIPVPLNDAEGKVLYVWAEAFEGYQSSAASWANKHDLDWKEYWDDKTVHFIGKDIIYHHTLFWPSMLMGRGWNLPYSVVGGGYLSLEGRKMSTSKGWVIWVEDFLKKFDSDLLRYYMVINAPLNKDTDFSWDDFQRRVNNELTDNLGNFIHRTFTFTNKFFDGKIPEMGSYTDEDKEFEEKIKALPDVVANYIDNFQFREGLQGIMSLTKEANKYFNDKKPWKGVKEDIESAKTCINLSNQLVHVLSIVLTPYIPISVQKIRKVLNMPTEHVDGFMKFEERTPLVKWDEAKEFLPAGYEINSAKPLFSKIPDEIIKEEKDKLYSLEEENKENEDDNMSDLISIDEFGKVKLVVGQIKEAQKIDGSENLLKLQVDLGKEVRQVVAGIAKRYEVDELIDKKVIVVANLQPAKLFGVESNGMLLATDSMELLTTEGNVGEYIK.

Positions 11 to 21 (PYANGPCHLGH) match the 'HIGH' region motif. The Zn(2+) site is built by cysteine 143, cysteine 146, cysteine 156, and cysteine 159. Positions 326–330 (KMSTS) match the 'KMSKS' region motif. Threonine 329 is a binding site for ATP. The region spanning 581–676 (EFGKVKLVVG…TEGNVGEYIK (96 aa)) is the tRNA-binding domain.

This sequence belongs to the class-I aminoacyl-tRNA synthetase family. MetG type 1 subfamily. As to quaternary structure, homodimer. Zn(2+) serves as cofactor.

It localises to the cytoplasm. The enzyme catalyses tRNA(Met) + L-methionine + ATP = L-methionyl-tRNA(Met) + AMP + diphosphate. Functionally, is required not only for elongation of protein synthesis but also for the initiation of all mRNA translation through initiator tRNA(fMet) aminoacylation. The chain is Methionine--tRNA ligase from Methanosphaera stadtmanae (strain ATCC 43021 / DSM 3091 / JCM 11832 / MCB-3).